We begin with the raw amino-acid sequence, 139 residues long: Small ribosomal subunit protein bS6 (139 aa).

Residues 119–139 (LKGASKVETPTGPESTDIQEK) are disordered. Over residues 130-139 (GPESTDIQEK) the composition is skewed to polar residues.

The protein belongs to the bacterial ribosomal protein bS6 family.

Binds together with bS18 to 16S ribosomal RNA. The polypeptide is Small ribosomal subunit protein bS6 (Borreliella burgdorferi (strain ZS7) (Borrelia burgdorferi)).